The following is a 351-amino-acid chain: Methylthioribose-1-phosphate isomerase (351 aa).

Substrate contacts are provided by residues 53 to 55 (RGA), arginine 96, and glutamine 205. Residue aspartate 246 is the Proton donor of the active site. 256–257 (NK) is a substrate binding site.

The protein belongs to the eIF-2B alpha/beta/delta subunits family. MtnA subfamily.

The catalysed reaction is 5-(methylsulfanyl)-alpha-D-ribose 1-phosphate = 5-(methylsulfanyl)-D-ribulose 1-phosphate. It functions in the pathway amino-acid biosynthesis; L-methionine biosynthesis via salvage pathway; L-methionine from S-methyl-5-thio-alpha-D-ribose 1-phosphate: step 1/6. Catalyzes the interconversion of methylthioribose-1-phosphate (MTR-1-P) into methylthioribulose-1-phosphate (MTRu-1-P). The polypeptide is Methylthioribose-1-phosphate isomerase (Synechocystis sp. (strain ATCC 27184 / PCC 6803 / Kazusa)).